We begin with the raw amino-acid sequence, 247 residues long: Cell division protein ZapD (247 aa).

Belongs to the ZapD family. As to quaternary structure, interacts with FtsZ.

The protein localises to the cytoplasm. Cell division factor that enhances FtsZ-ring assembly. Directly interacts with FtsZ and promotes bundling of FtsZ protofilaments, with a reduction in FtsZ GTPase activity. This chain is Cell division protein ZapD, found in Shigella boydii serotype 4 (strain Sb227).